Consider the following 185-residue polypeptide: Alkyl hydroperoxide reductase AhpD (185 aa).

Cys-132 functions as the Proton donor in the catalytic mechanism. Cys-132 and Cys-135 are joined by a disulfide. Cys-135 serves as the catalytic Cysteine sulfenic acid (-SOH) intermediate.

This sequence belongs to the AhpD family.

The catalysed reaction is N(6)-[(R)-dihydrolipoyl]-L-lysyl-[lipoyl-carrier protein] + a hydroperoxide = N(6)-[(R)-lipoyl]-L-lysyl-[lipoyl-carrier protein] + an alcohol + H2O. Functionally, antioxidant protein with alkyl hydroperoxidase activity. Required for the reduction of the AhpC active site cysteine residues and for the regeneration of the AhpC enzyme activity. This chain is Alkyl hydroperoxide reductase AhpD, found in Anaeromyxobacter sp. (strain Fw109-5).